A 447-amino-acid polypeptide reads, in one-letter code: N-succinylarginine dihydrolase (447 aa).

Substrate-binding positions include 19–28, Asn-110, and 137–138; these read AGLSFGNEAS and HR. Glu-174 is an active-site residue. Arg-214 is a binding site for substrate. Residue His-250 is part of the active site. Residues Asp-252 and Asn-365 each contribute to the substrate site. Residue Cys-371 is the Nucleophile of the active site.

It belongs to the succinylarginine dihydrolase family. Homodimer.

The catalysed reaction is N(2)-succinyl-L-arginine + 2 H2O + 2 H(+) = N(2)-succinyl-L-ornithine + 2 NH4(+) + CO2. It functions in the pathway amino-acid degradation; L-arginine degradation via AST pathway; L-glutamate and succinate from L-arginine: step 2/5. Functionally, catalyzes the hydrolysis of N(2)-succinylarginine into N(2)-succinylornithine, ammonia and CO(2). The sequence is that of N-succinylarginine dihydrolase from Acinetobacter baumannii (strain SDF).